Consider the following 356-residue polypeptide: Tyrosine recombinase XerS (356 aa).

The 106-residue stretch at 16–121 (VMPPYVLEYY…ALSSLYKYLT (106 aa)) folds into the Core-binding (CB) domain. Positions 169–354 (GFLDYIDSEY…INEEQKNALD (186 aa)) constitute a Tyr recombinase domain. Active-site residues include arginine 210, lysine 234, histidine 306, arginine 309, and histidine 332. Residue tyrosine 341 is the O-(3'-phospho-DNA)-tyrosine intermediate of the active site.

This sequence belongs to the 'phage' integrase family. XerS subfamily.

It localises to the cytoplasm. FtsK is required for recombination. Its function is as follows. Site-specific tyrosine recombinase, which acts by catalyzing the cutting and rejoining of the recombining DNA molecules. Essential to convert dimers of the bacterial chromosome into monomers to permit their segregation at cell division. Binds an atypical recombination dif site (difSL). Binds preferentially to the left arm and cooperatively to the right arm of difSL. This Lactococcus lactis subsp. cremoris (strain MG1363) protein is Tyrosine recombinase XerS.